The following is a 257-amino-acid chain: DNA repair protein RecO (257 aa).

This sequence belongs to the RecO family.

Involved in DNA repair and RecF pathway recombination. The polypeptide is DNA repair protein RecO (Clostridium kluyveri (strain ATCC 8527 / DSM 555 / NBRC 12016 / NCIMB 10680 / K1)).